A 259-amino-acid chain; its full sequence is Deoxyribose-phosphate aldolase (259 aa).

Aspartate 102 acts as the Proton donor/acceptor in catalysis. The active-site Schiff-base intermediate with acetaldehyde is lysine 167. Lysine 201 (proton donor/acceptor) is an active-site residue.

The protein belongs to the DeoC/FbaB aldolase family. DeoC type 2 subfamily.

The protein localises to the cytoplasm. The enzyme catalyses 2-deoxy-D-ribose 5-phosphate = D-glyceraldehyde 3-phosphate + acetaldehyde. The protein operates within carbohydrate degradation; 2-deoxy-D-ribose 1-phosphate degradation; D-glyceraldehyde 3-phosphate and acetaldehyde from 2-deoxy-alpha-D-ribose 1-phosphate: step 2/2. Catalyzes a reversible aldol reaction between acetaldehyde and D-glyceraldehyde 3-phosphate to generate 2-deoxy-D-ribose 5-phosphate. The sequence is that of Deoxyribose-phosphate aldolase from Escherichia coli (strain SMS-3-5 / SECEC).